Reading from the N-terminus, the 68-residue chain is MDARLLEILVCPICKGPLHYDRGAQELVCHADKLAYPIRDGIPVMLVDEARQTVEGTPVDPAGPAQGR.

This sequence belongs to the UPF0434 family.

In Burkholderia pseudomallei (strain 668), this protein is UPF0434 protein BURPS668_0926.